Here is a 147-residue protein sequence, read N- to C-terminus: MANNYGNAGYNGPTNGPYGNAGYNGANGPYGNNSVHQGQPHTDQNGVPILHYGNGGYNGPQAQYGNAGQNQPSGPFGGAGYTGPTAGTGFGNAGYTPSPPAGVPGNGFVPGGVDVHDDHHHDGHHKKHGRKEHDHHHGHHHGHHHKH.

The segment at 29-147 (PYGNNSVHQG…GHHHGHHHKH (119 aa)) is disordered. Composition is skewed to polar residues over residues 34-45 (SVHQGQPHTDQN) and 60-73 (PQAQYGNAGQNQPS). The span at 75–92 (PFGGAGYTGPTAGTGFGN) shows a compositional bias: gly residues. Residues 122 to 147 (DGHHKKHGRKEHDHHHGHHHGHHHKH) are compositionally biased toward basic residues.

This is an uncharacterized protein from Caenorhabditis elegans.